A 209-amino-acid chain; its full sequence is Transmembrane protein 52 (209 aa).

Residues 1-32 (MARGPLAARGLRLLLPLLPLLPLLPLPQVALG) form the signal peptide. A helical membrane pass occupies residues 56-76 (VGLILLAVLLLLLCGVTAGCV). A disordered region spans residues 145 to 209 (AYSLYTPEPP…QLPPCSPGAP (65 aa)). Over residues 159–170 (EAVKMAKPREEG) the composition is skewed to basic and acidic residues. Residues 186–202 (LETTPVPQESGPNTQLP) show a composition bias toward polar residues.

Its subcellular location is the membrane. The polypeptide is Transmembrane protein 52 (TMEM52) (Homo sapiens (Human)).